We begin with the raw amino-acid sequence, 467 residues long: Argininosuccinate lyase (467 aa).

This sequence belongs to the lyase 1 family. Argininosuccinate lyase subfamily.

Its subcellular location is the cytoplasm. It carries out the reaction 2-(N(omega)-L-arginino)succinate = fumarate + L-arginine. Its pathway is amino-acid biosynthesis; L-arginine biosynthesis; L-arginine from L-ornithine and carbamoyl phosphate: step 3/3. In Chromohalobacter salexigens (strain ATCC BAA-138 / DSM 3043 / CIP 106854 / NCIMB 13768 / 1H11), this protein is Argininosuccinate lyase.